The chain runs to 667 residues: Leucine-rich repeat-containing protein 43 (667 aa).

A compositionally biased stretch (polar residues) spans Met-1–Tyr-11. A disordered region spans residues Met-1–Thr-24. LRR repeat units follow at residues Lys-148–Pro-169, Thr-170–Pro-191, Arg-194–Tyr-213, and Gln-221–Leu-242. Residues Asn-256–Leu-294 form the LRRCT domain. 3 disordered regions span residues Phe-374–Met-407, Glu-533–Pro-570, and Ser-616–Gln-640. Positions Thr-377–Pro-386 are enriched in acidic residues. Positions Arg-390–Phe-399 are enriched in basic residues. Residues Lys-540–Asp-553 are compositionally biased toward basic and acidic residues. Residues Lys-617–Arg-627 are compositionally biased toward basic residues.

This chain is Leucine-rich repeat-containing protein 43 (Lrrc43), found in Mus musculus (Mouse).